Reading from the N-terminus, the 569-residue chain is Protein misato homolog 1 (569 aa).

Phosphoserine occurs at positions 41 and 495.

Belongs to the misato family.

Its subcellular location is the mitochondrion outer membrane. It localises to the cytoplasm. Involved in the regulation of mitochondrial distribution and morphology. Required for mitochondrial fusion and mitochondrial network formation. This is Protein misato homolog 1 (MSTO1) from Macaca fascicularis (Crab-eating macaque).